Reading from the N-terminus, the 639-residue chain is Centromere protein T (639 aa).

Disordered regions lie at residues 1–64, 266–294, 307–451, 458–477, and 494–534; these read MDGR…RPNA, QLSDSKTSAQRSNTSYPAHEKARLEGLVS, SEKD…ERGT, AAEEEATDDESDKEDHESEE, and QPVL…TREP. The span at 12 to 23 shows a compositional bias: low complexity; that stretch reads RAAPTPRVAVRS. Residues 80–500 are flexible stalk domain; sequence IIQNQPQVSP…YRPQPVLSPP (421 aa). Positions 267-281 are enriched in polar residues; it reads LSDSKTSAQRSNTSY. Composition is skewed to basic and acidic residues over residues 307 to 319, 329 to 338, 356 to 371, and 432 to 449; these read SEKDLITDHEHVD, QGEEEQDHSQ, TEHHADAEYSEHSEKK, and PGAKPLKEAVEQTGEIER. A compositionally biased stretch (acidic residues) spans 458 to 469; that stretch reads AAEEEATDDESD.

Belongs to the CENP-T/CNN1 family. As to quaternary structure, component of the CENPA-CAD complex, composed of CENPI, CENPK, CENPL, CENPO, CENPP, CENPQ, CENPR and CENPS. The CENPA-CAD complex is probably recruited on centromeres by the CENPA-NAC complex, at least composed of CENPA, CENPC, CENPH, CENPM, CENPN, CENPT and CENPU. Identified in a centromeric complex containing histones H2A, H2B, H3 and H4, and at least CENPA, CENPB, CENPC, CENPT, CENPN, HJURP, SUPT16H, SSRP1 and RSF1. Interacts (via N-terminus) with the NDC80 complex. Heterodimer with CENPW; this dimer coassembles with CENPS-CENPX heterodimers at centromeres to form the tetrameric CENP-T-W-S-X complex.

Its subcellular location is the nucleus. It is found in the chromosome. The protein localises to the centromere. It localises to the kinetochore. Functionally, component of the CENPA-NAC (nucleosome-associated) complex, a complex that plays a central role in assembly of kinetochore proteins, mitotic progression and chromosome segregation. The CENPA-NAC complex recruits the CENPA-CAD (nucleosome distal) complex and may be involved in incorporation of newly synthesized CENPA into centromeres. Part of a nucleosome-associated complex that binds specifically to histone H3-containing nucleosomes at the centromere, as opposed to nucleosomes containing CENPA. Component of the heterotetrameric CENP-T-W-S-X complex that binds and supercoils DNA, and plays an important role in kinetochore assembly. CENPT has a fundamental role in kinetochore assembly and function. It is one of the inner kinetochore proteins, with most further proteins binding downstream. Required for normal chromosome organization and normal progress through mitosis. The chain is Centromere protein T (CENPT) from Gallus gallus (Chicken).